A 200-amino-acid chain; its full sequence is Methylamine utilization protein MauD (200 aa).

The chain crosses the membrane as a helical span at residues 4 to 24 (FLIASNILLWLAFLGVTVVML). Residues 49–183 (PDIGDAAPEF…LESLLEADRT (135 aa)) form the Thioredoxin domain.

The protein localises to the membrane. It functions in the pathway one-carbon metabolism; methylamine degradation. In terms of biological role, may be specifically involved in the processing, transport, and/or maturation of the MADH beta-subunit. The sequence is that of Methylamine utilization protein MauD (mauD) from Paracoccus denitrificans.